A 29-amino-acid chain; its full sequence is Cyclotide mang-A (29 aa).

Positions 1–29 form a cross-link, cyclopeptide (Gly-Asp); the sequence is GFPTCGETCTLGTCNTPGCTCSWPICTRD. 3 cysteine pairs are disulfide-bonded: Cys5–Cys19, Cys9–Cys21, and Cys14–Cys26.

This sequence belongs to the cyclotide family. Moebius subfamily. This is a cyclic peptide.

Functionally, probably participates in a plant defense mechanism. This chain is Cyclotide mang-A, found in Melicytus angustifolius (Hymenanthera angustifolia).